The chain runs to 185 residues: MISVNDFRTGLTITVDNDLWQVIEFQHVKPGKGAAFVRSKLRNLRTGAIQEKTFRAGEKVEKAHIENRRMQYLYASGEAHVFMDNGTYEQIELSEAQIERELKFLKENMEVSIMTYQGEVLGVELPNTVELKVVETEPGIKGDTASNVTKPATLETGLVVQVPIFINEGEMLVINTAEGKYVSRA.

Belongs to the elongation factor P family.

Its subcellular location is the cytoplasm. The protein operates within protein biosynthesis; polypeptide chain elongation. Its function is as follows. Involved in peptide bond synthesis. Stimulates efficient translation and peptide-bond synthesis on native or reconstituted 70S ribosomes in vitro. Probably functions indirectly by altering the affinity of the ribosome for aminoacyl-tRNA, thus increasing their reactivity as acceptors for peptidyl transferase. The protein is Elongation factor P of Bacillus cytotoxicus (strain DSM 22905 / CIP 110041 / 391-98 / NVH 391-98).